We begin with the raw amino-acid sequence, 319 residues long: Ribonucleoside-diphosphate reductase small chain (319 aa).

Residues Asp70, Glu101, and His104 each coordinate Fe cation. Tyr108 is a catalytic residue. Fe cation is bound by residues Glu163, Glu197, and His200. An interaction with R1 region spans residues Phe313–Phe319.

It belongs to the ribonucleoside diphosphate reductase small chain family. Interacts with RNR1/OPG080 subunit. Can interact with host RNR1 supunit. Requires Fe cation as cofactor.

It catalyses the reaction a 2'-deoxyribonucleoside 5'-diphosphate + [thioredoxin]-disulfide + H2O = a ribonucleoside 5'-diphosphate + [thioredoxin]-dithiol. Functionally, ribonucleoside-diphosphate reductase holoenzyme provides the precursors necessary for viral DNA synthesis. Allows virus growth in non-dividing cells. Catalyzes the biosynthesis of deoxyribonucleotides from the corresponding ribonucleotides. The chain is Ribonucleoside-diphosphate reductase small chain (OPG048) from Bos taurus (Bovine).